The sequence spans 263 residues: Phosphatidylglycerol--prolipoprotein diacylglyceryl transferase (263 aa).

A run of 4 helical transmembrane segments spans residues 10-30, 56-76, 91-111, and 117-137; these read VAIT…LFGF, MVTY…ILFY, IWNG…AMWL, and GLGF…GLFF. An a 1,2-diacyl-sn-glycero-3-phospho-(1'-sn-glycerol)-binding site is contributed by Arg139. The next 3 helical transmembrane spans lie at 171–191, 199–219, and 231–251; these read PSQL…LWVF, GHVS…VEFV, and FGWL…GLWL.

It belongs to the Lgt family.

It localises to the cell inner membrane. It carries out the reaction L-cysteinyl-[prolipoprotein] + a 1,2-diacyl-sn-glycero-3-phospho-(1'-sn-glycerol) = an S-1,2-diacyl-sn-glyceryl-L-cysteinyl-[prolipoprotein] + sn-glycerol 1-phosphate + H(+). Its pathway is protein modification; lipoprotein biosynthesis (diacylglyceryl transfer). Catalyzes the transfer of the diacylglyceryl group from phosphatidylglycerol to the sulfhydryl group of the N-terminal cysteine of a prolipoprotein, the first step in the formation of mature lipoproteins. The protein is Phosphatidylglycerol--prolipoprotein diacylglyceryl transferase of Nitratidesulfovibrio vulgaris (strain ATCC 29579 / DSM 644 / CCUG 34227 / NCIMB 8303 / VKM B-1760 / Hildenborough) (Desulfovibrio vulgaris).